Here is a 30-residue protein sequence, read N- to C-terminus: MIYDSQVYTVLLIALLASVLAIRLGSTLYQ.

A helical membrane pass occupies residues valine 7–tyrosine 29.

Belongs to the PsaM family.

The protein resides in the plastid. It is found in the chloroplast thylakoid membrane. This Trieres chinensis (Marine centric diatom) protein is Photosystem I reaction center subunit XII.